A 322-amino-acid polypeptide reads, in one-letter code: Pantothenate kinase (322 aa).

An ATP-binding site is contributed by 100–107; sequence GSVAVGKS.

Belongs to the prokaryotic pantothenate kinase family.

The protein localises to the cytoplasm. The catalysed reaction is (R)-pantothenate + ATP = (R)-4'-phosphopantothenate + ADP + H(+). It participates in cofactor biosynthesis; coenzyme A biosynthesis; CoA from (R)-pantothenate: step 1/5. The protein is Pantothenate kinase of Agrobacterium fabrum (strain C58 / ATCC 33970) (Agrobacterium tumefaciens (strain C58)).